The sequence spans 201 residues: MEKFTKLTGIAAPMPLVNIDTDMIIPKQFLKTIKRSGLGVNLFDEMRYDRQGNENPDFVLNKPQYRDAQILVTGENFGCGSSREHAPWALLDFGIRCVIAPSFADIFYNNCFKNGILPIALPQEEVDKLMDDAARGANATVTVDLENQTISGPDGGTISFEVDAFKKHCLLNGLDDIGLSLEKVASIDAFEAQASAARPWV.

It belongs to the LeuD family. LeuD type 1 subfamily. Heterodimer of LeuC and LeuD.

It carries out the reaction (2R,3S)-3-isopropylmalate = (2S)-2-isopropylmalate. It functions in the pathway amino-acid biosynthesis; L-leucine biosynthesis; L-leucine from 3-methyl-2-oxobutanoate: step 2/4. In terms of biological role, catalyzes the isomerization between 2-isopropylmalate and 3-isopropylmalate, via the formation of 2-isopropylmaleate. In Dinoroseobacter shibae (strain DSM 16493 / NCIMB 14021 / DFL 12), this protein is 3-isopropylmalate dehydratase small subunit.